The following is a 424-amino-acid chain: Serine--tRNA ligase (424 aa).

Position 230 to 232 (230 to 232) interacts with L-serine; the sequence is TAE. ATP is bound at residue 261-263; it reads RSE. Glu284 provides a ligand contact to L-serine. 348-351 is an ATP binding site; the sequence is EISS. Ser384 contacts L-serine.

The protein belongs to the class-II aminoacyl-tRNA synthetase family. Type-1 seryl-tRNA synthetase subfamily. In terms of assembly, homodimer. The tRNA molecule binds across the dimer.

It localises to the cytoplasm. The catalysed reaction is tRNA(Ser) + L-serine + ATP = L-seryl-tRNA(Ser) + AMP + diphosphate + H(+). It catalyses the reaction tRNA(Sec) + L-serine + ATP = L-seryl-tRNA(Sec) + AMP + diphosphate + H(+). The protein operates within aminoacyl-tRNA biosynthesis; selenocysteinyl-tRNA(Sec) biosynthesis; L-seryl-tRNA(Sec) from L-serine and tRNA(Sec): step 1/1. Functionally, catalyzes the attachment of serine to tRNA(Ser). Is also able to aminoacylate tRNA(Sec) with serine, to form the misacylated tRNA L-seryl-tRNA(Sec), which will be further converted into selenocysteinyl-tRNA(Sec). The protein is Serine--tRNA ligase of Streptococcus pneumoniae (strain 70585).